A 272-amino-acid chain; its full sequence is Shikimate dehydrogenase (NADP(+)) (272 aa).

Residues Ser-14–Ser-16 and Thr-61 each bind shikimate. The Proton acceptor role is filled by Lys-65. Residue Glu-77 coordinates NADP(+). Shikimate contacts are provided by Asn-86 and Asp-102. NADP(+)-binding positions include Gly-126–Ala-130, Asn-149–Arg-154, and Met-213. A shikimate-binding site is contributed by Tyr-215. Gly-237 lines the NADP(+) pocket.

Belongs to the shikimate dehydrogenase family. As to quaternary structure, homodimer.

It catalyses the reaction shikimate + NADP(+) = 3-dehydroshikimate + NADPH + H(+). It participates in metabolic intermediate biosynthesis; chorismate biosynthesis; chorismate from D-erythrose 4-phosphate and phosphoenolpyruvate: step 4/7. Its function is as follows. Involved in the biosynthesis of the chorismate, which leads to the biosynthesis of aromatic amino acids. Catalyzes the reversible NADPH linked reduction of 3-dehydroshikimate (DHSA) to yield shikimate (SA). In Escherichia coli O81 (strain ED1a), this protein is Shikimate dehydrogenase (NADP(+)).